A 360-amino-acid chain; its full sequence is SVP1-like protein 2 (360 aa).

WD repeat units lie at residues 12–50, 191–231, and 236–275; these read AHEP…LRMK, AHKS…LRFE, and LDRA…PQPE.

The protein belongs to the WD repeat PROPPIN family.

The protein resides in the vacuole membrane. Its subcellular location is the cytoplasmic vesicle membrane. Involved in mitochondrial or peroxisomal functions and amino acid signaling pathways. This Pichia angusta (Yeast) protein is SVP1-like protein 2 (HSV2).